The sequence spans 293 residues: Pyridoxal 5'-phosphate synthase subunit PdxS (293 aa).

Residue Asp23 coordinates D-ribose 5-phosphate. Lys80 serves as the catalytic Schiff-base intermediate with D-ribose 5-phosphate. Gly152 serves as a coordination point for D-ribose 5-phosphate. Arg164 is a binding site for D-glyceraldehyde 3-phosphate. D-ribose 5-phosphate is bound by residues Gly213 and 234 to 235 (GS).

Belongs to the PdxS/SNZ family. In terms of assembly, in the presence of PdxT, forms a dodecamer of heterodimers.

It catalyses the reaction aldehydo-D-ribose 5-phosphate + D-glyceraldehyde 3-phosphate + L-glutamine = pyridoxal 5'-phosphate + L-glutamate + phosphate + 3 H2O + H(+). The protein operates within cofactor biosynthesis; pyridoxal 5'-phosphate biosynthesis. Functionally, catalyzes the formation of pyridoxal 5'-phosphate from ribose 5-phosphate (RBP), glyceraldehyde 3-phosphate (G3P) and ammonia. The ammonia is provided by the PdxT subunit. Can also use ribulose 5-phosphate and dihydroxyacetone phosphate as substrates, resulting from enzyme-catalyzed isomerization of RBP and G3P, respectively. In Dehalococcoides mccartyi (strain ATCC BAA-2266 / KCTC 15142 / 195) (Dehalococcoides ethenogenes (strain 195)), this protein is Pyridoxal 5'-phosphate synthase subunit PdxS.